The primary structure comprises 306 residues: Serine/threonine-protein phosphatase PP-X homolog 4 (306 aa).

Mn(2+) is bound by residues Asp-53, His-55, Asp-81, and Asn-113. The active-site Proton donor is His-114. 2 residues coordinate Mn(2+): His-163 and His-237.

This sequence belongs to the PPP phosphatase family. PP-4 (PP-X) subfamily. Requires Mn(2+) as cofactor.

It carries out the reaction O-phospho-L-seryl-[protein] + H2O = L-seryl-[protein] + phosphate. The enzyme catalyses O-phospho-L-threonyl-[protein] + H2O = L-threonyl-[protein] + phosphate. In Paramecium tetraurelia, this protein is Serine/threonine-protein phosphatase PP-X homolog 4 (Ppx4).